A 356-amino-acid polypeptide reads, in one-letter code: Testis-expressed protein 19.1 (356 aa).

Residues 1 to 78 are interaction with LIRE1; it reads MCPPVSVRHG…WDAEPMEHLS (78 aa). Acidic residues predominate over residues 59–72; that stretch reads LSEEEEEEEVWDAE. The segment at 59–107 is disordered; that stretch reads LSEEEEEEEVWDAEPMEHLSESESLESDSKQDAGSEQDAGSEPNTRSEQ. Positions 73 to 91 are enriched in basic and acidic residues; the sequence is PMEHLSESESLESDSKQDA. The interval 139-186 is important for interaction with piRNA; sequence QWVVFSISVPTELLPQEAVPLDLGPEDVEWTQALPWRLDVLFPCSHRL.

Interacts with UBR2; does not lead to Tex19.1 degradation and stabilizes it. Interacts with piRNA-associated proteins DDX4, EDC4, MAEL, PIWIL1, PIWIL2, RANBP9 and TDRD6. Interacts with L1RE1.

The protein localises to the cytoplasm. Required during spermatogenesis and placenta development, participating in the repression of retrotransposable elements and prevent their mobilization. Collaborates with the Piwi-interacting RNA (piRNA) pathway, which mediates the repression of transposable elements during meiosis by forming complexes composed of piRNAs and Piwi proteins. Interacts with Piwi proteins and directly binds piRNAs, a class of 24 to 30 nucleotide RNAs that are generated by a Dicer-independent mechanism and are primarily derived from transposons and other repeated sequence elements. Also during spermatogenesis, promotes, with UBR2, SPO11-dependent recombination foci to accumulate and drive robust homologous chromosome synapsis. Interacts with LINE-1 retrotransposon encoded LIRE1, stimulates LIRE1 polyubiquitination, mediated by UBR2, and degradation, inhibiting LINE-1 retrotransposon mobilization. The polypeptide is Testis-expressed protein 19.1 (Tex19.1) (Rattus norvegicus (Rat)).